The following is a 465-amino-acid chain: MFINGEWINRKDIEVKNPYNNEIIGYIPSLSRNETKEAIKIAEEHKSTMKNLSPTIRYNILMKIASELSKNKRELAKLITIDVGKPIKQSIIEVDRTITTFKFSAFYSRELRGETIPFDDGMVITKREPVGLVGAITPFNFPLNLFAHKIAPAIAMGNSIVAHPSSKAPMITIELTKIIEKVLKSKKIPLGVFNLLTGEGHIVGDEIVKNNKINKLSFTGSVEVGESITKKAGFKKITLELGGNNPMIILKDANINKAVESCMSGKFLNSGQVCISVGRVLIEQEVADEFINKIVEKVKKLKIGNPLDEDTNISSLISLDSAERVEKLINKSIGQGGKLICGGKRENSIIYPTILEITADNILANIEIFAPVLPIIRVNDMNEALNQANNSNYGLHSGVFTQDINKALYFADNLEYGGVLINNSPTFRIDNMPFGGIKHSGLGREGIKYAIDEMSEIKTIIVNTK.

An NAD(+)-binding site is contributed by 220–225; the sequence is GSVEVG. Active-site residues include Glu-240 and Cys-274.

Belongs to the aldehyde dehydrogenase family. Homotetramer.

The catalysed reaction is (S)-lactaldehyde + NAD(+) + H2O = (S)-lactate + NADH + 2 H(+). It functions in the pathway cofactor biosynthesis; coenzyme F420 biosynthesis. Involved in F420 biosynthesis through the oxidation of lactaldehyde to lactate. The chain is Lactaldehyde dehydrogenase from Methanococcus aeolicus (strain ATCC BAA-1280 / DSM 17508 / OCM 812 / Nankai-3).